The following is an 86-amino-acid chain: Cell division topological specificity factor (86 aa).

The protein belongs to the MinE family.

Prevents the cell division inhibition by proteins MinC and MinD at internal division sites while permitting inhibition at polar sites. This ensures cell division at the proper site by restricting the formation of a division septum at the midpoint of the long axis of the cell. The sequence is that of Cell division topological specificity factor from Aliivibrio salmonicida (strain LFI1238) (Vibrio salmonicida (strain LFI1238)).